The sequence spans 949 residues: ATPase 6, plasma membrane-type (949 aa).

Topologically, residues 1-64 are cytoplasmic; the sequence is MAADISWDEI…EKVENKFLKF (64 aa). The helical transmembrane segment at 65–84 threads the bilayer; it reads LGFMWNPLSWVMEAAAIMAI. Residues 85 to 96 are Extracellular-facing; sequence VLANGGGRPPDW. A helical membrane pass occupies residues 97-117; that stretch reads QDFVGITCLLIINSTISFIEE. Residues 118–246 are Cytoplasmic-facing; sequence NNAGNAAAAL…GHFQKVLTAI (129 aa). A helical transmembrane segment spans residues 247-267; the sequence is GNFCICSIGIGMLIEIIIMYP. Topologically, residues 268 to 276 are extracellular; it reads IQHRKYRDG. Residues 277–294 traverse the membrane as a helical segment; the sequence is IDNLLVLLIGGIPIAMPT. Residues 295–645 lie on the Cytoplasmic side of the membrane; it reads VLSVTMAIGS…TSRAIFQRMK (351 aa). D332 (4-aspartylphosphate intermediate) is an active-site residue. The Mg(2+) site is built by D590 and D594. Residues 646–667 form a helical membrane-spanning segment; the sequence is NYTIYAVSITIRIVLGFMLVAL. Residues 668 to 672 are Extracellular-facing; that stretch reads IWEFD. The helical transmembrane segment at 673–695 threads the bilayer; it reads FSPFMVLIIAILNDGTIMTISKD. The Cytoplasmic segment spans residues 696–711; sequence RVKPSPIPDSWKLKEI. A helical membrane pass occupies residues 712–732; the sequence is FATGVVLGTYMALVTVVFFWL. At 733 to 753 the chain is on the extracellular side; the sequence is AHDTTFFSDKFGVRSLQGKDE. A helical transmembrane segment spans residues 754 to 774; it reads ELIAVLYLQVSIISQALIFVT. Over 775–786 the chain is Cytoplasmic; sequence RSRSWSFVERPG. A helical membrane pass occupies residues 787–807; the sequence is LLLLIAFFVAQLIATLIATYA. Topologically, residues 808–815 are extracellular; it reads HWEFARIK. A helical membrane pass occupies residues 816 to 836; the sequence is GCGWGWCGVIWIYSIVTYIPL. At 837 to 949 the chain is on the cytoplasmic side; sequence DILKFITRYT…IDNLNQHYTV (113 aa). T883 is modified (phosphothreonine). S931 is subject to Phosphoserine. The segment at 947–949 is interaction with 14-3-3 proteins; it reads YTV. Residue T948 is modified to Phosphothreonine.

The protein belongs to the cation transport ATPase (P-type) (TC 3.A.3) family. Type IIIA subfamily. As to quaternary structure, binds to 14-3-3 proteins. The binding is induced by phosphorylation of Thr-948. Binding to 14-3-3 proteins activates the H(+)-ATPase. Expressed in guard cells.

It is found in the membrane. The enzyme catalyses ATP + H2O + H(+)(in) = ADP + phosphate + 2 H(+)(out). Functionally, the plasma membrane H(+) ATPase of plants and fungi generates a proton gradient that drives the active transport of nutrients by H(+)-symport. The resulting external acidification and/or internal alkinization may mediate growth responses. The protein is ATPase 6, plasma membrane-type (AHA6) of Arabidopsis thaliana (Mouse-ear cress).